The chain runs to 461 residues: MRNVKNYTPKEIVAELDKYIVGQKEAKKSVAVALRNRYRRSLLPEDFKEEVTPKNILMVGPTGVGKTEIARRIAKLVEAPFVKVEATKFTEVGYVGRDVDSMVRDLVEAAVRMVKEEKLKAVTEKAKKLAEERLIDYLLGKKKKQPKNPFEMIFNYPSSERTEEPDNVDSYKREEIRQRLRSGELDNHMVEIEVTDTTPPMLEMYTNLGAEELNITLQDMFSDLLPKKKKLRKVTVAEAKKILEAEEAQNLIDMDEVIEEAVKRAENDGIIFIDEIDKIASTGYSAGPDVSREGVQRDLLPIIEGCTVMTKYGPVKTDYILFIAAGAFNVAKVSDLIPELQGRFPIRVNLKPLTKEDFVRILKEPKNALTKQYQELLRTEGVEIKYTEEAIETIAEVAYLINQQSEDIGARRLHTVMEKLFEDLSFHAPELSGQEIVITADYVKEQLKDSLNKYEVNKYIL.

ATP-binding positions include valine 21, 63–68 (GVGKTE), aspartate 274, glutamate 339, and arginine 411.

Belongs to the ClpX chaperone family. HslU subfamily. In terms of assembly, a double ring-shaped homohexamer of HslV is capped on each side by a ring-shaped HslU homohexamer. The assembly of the HslU/HslV complex is dependent on binding of ATP.

Its subcellular location is the cytoplasm. In terms of biological role, ATPase subunit of a proteasome-like degradation complex; this subunit has chaperone activity. The binding of ATP and its subsequent hydrolysis by HslU are essential for unfolding of protein substrates subsequently hydrolyzed by HslV. HslU recognizes the N-terminal part of its protein substrates and unfolds these before they are guided to HslV for hydrolysis. This Caldanaerobacter subterraneus subsp. tengcongensis (strain DSM 15242 / JCM 11007 / NBRC 100824 / MB4) (Thermoanaerobacter tengcongensis) protein is ATP-dependent protease ATPase subunit HslU.